Here is a 129-residue protein sequence, read N- to C-terminus: Small ribosomal subunit protein uS11c (129 aa).

Belongs to the universal ribosomal protein uS11 family. In terms of assembly, part of the 30S ribosomal subunit.

Its subcellular location is the plastid. It is found in the chloroplast. The polypeptide is Small ribosomal subunit protein uS11c (Oltmannsiellopsis viridis (Marine flagellate)).